We begin with the raw amino-acid sequence, 117 residues long: Ig heavy chain V region 3 (117 aa).

Residues 1–19 form the signal peptide; that stretch reads MGWSCIILFLVATATGVHS. The segment at 20-49 is framework-1; it reads QVQLQQPGAELVRPGSSVKLSCKASGYTFT. Cys41 and Cys115 are oxidised to a cystine. Residues 50 to 54 form a complementarity-determining-1 region; that stretch reads SYWMD. A framework-2 region spans residues 55–68; sequence WVKQRPGQGLEWIG. The segment at 69-85 is complementarity-determining-2; that stretch reads NIYPSDSETHYNQKFKD. The segment at 86–117 is framework-3; sequence KATLTVDKSSSTAYMQLSSLTSEDSAVYYCAR.

The chain is Ig heavy chain V region 3 (Ighv1-61) from Mus musculus (Mouse).